Here is a 489-residue protein sequence, read N- to C-terminus: GDP-fucose protein O-fucosyltransferase 4 (489 aa).

Residues 1 to 7 lie on the Cytoplasmic side of the membrane; that stretch reads MAARCTE. Residues 8 to 24 form a helical; Signal-anchor for type II membrane protein membrane-spanning segment; that stretch reads AVLAALGVLSVCSASSS. Residues 25–489 are Lumenal-facing; that stretch reads GSEASGEAER…EIFMKRNKNL (465 aa). Residue Asn-162 is glycosylated (N-linked (GlcNAc...) asparagine). A disulfide bond links Cys-385 and Cys-388.

Belongs to the glycosyltransferase 10 family. Widely expressed. Expressed at slightly higher level in heart, kidney and lung.

It is found in the endoplasmic reticulum membrane. The catalysed reaction is L-threonyl-[protein] + GDP-beta-L-fucose = 3-O-(alpha-L-fucosyl)-L-threonyl-[protein] + GDP + H(+). It carries out the reaction L-seryl-[protein] + GDP-beta-L-fucose = 3-O-(alpha-L-fucosyl)-L-seryl-[protein] + GDP + H(+). Its pathway is protein modification; protein glycosylation. Its function is as follows. Protein O-fucosyltransferase that specifically catalyzes O-fucosylation of serine or threonine residues in EMI domains of target proteins, such as MMRN1, MMRN2 and EMID1. Attaches fucose through an O-glycosidic linkage. O-fucosylation of EMI domain-containing proteins may be required for facilitating protein folding and secretion. Also shows minor alpha-(1,3)-fucosyltransferase activity toward activity toward biantennary N-glycan acceptors. However, this was tested with a library of synthetic substrates and this activity is unsure in vivo. This chain is GDP-fucose protein O-fucosyltransferase 4 (Fut11), found in Mus musculus (Mouse).